The following is a 494-amino-acid chain: Alpha-amylase B (494 aa).

A signal peptide spans 1–18 (MFLAKSIVCLALLAVANA). Glutamine 19 bears the Pyrrolidone carboxylic acid mark. A disulfide bond links cysteine 46 and cysteine 102. Positions 116, 165, and 174 each coordinate Ca(2+). A disulfide bridge links cysteine 153 with cysteine 167. Arginine 202 contacts chloride. Aspartate 204 acts as the Nucleophile in catalysis. Residue histidine 208 participates in Ca(2+) binding. Glutamate 241 serves as the catalytic Proton donor. 2 residues coordinate chloride: asparagine 304 and arginine 343. 2 disulfides stabilise this stretch: cysteine 376/cysteine 382 and cysteine 448/cysteine 460.

Belongs to the glycosyl hydrolase 13 family. Monomer. Ca(2+) is required as a cofactor. Chloride serves as cofactor.

The catalysed reaction is Endohydrolysis of (1-&gt;4)-alpha-D-glucosidic linkages in polysaccharides containing three or more (1-&gt;4)-alpha-linked D-glucose units.. This Drosophila yakuba (Fruit fly) protein is Alpha-amylase B (Amy-d).